The primary structure comprises 311 residues: MGVTAVLMLPLLLLGISGLLFIYQEVSRLWSKSVVQNKVVVITDAISGLGKECARVFHTGGARLVLCGKNWERLQSLYDALISVADPSKTFTPKLVLLDLSDISCVQDVAKEVLDCYGCVDILINNASVKVKGPAHKISLELDKKIMDANYFGPIILTKALLPDMISRRTGQIVLVNNIQGKLGIPFRTAYAASKHAALGFFDCLRAEVEEYDVVVSTVSPTFIRSYHVDPGQGNWEASIWKFFFRKLTYGTHPVDVAEEVMRTVRRKKQEVFLANPIPKAAVYIRTLFPELFFAVVACGVKEKLSVPEEG.

Positions 1–18 (MGVTAVLMLPLLLLGISG) are cleaved as a signal peptide. The NAD(+) site is built by S47, L49, Y191, K195, and S226. The active-site Proton acceptor is the Y191.

Belongs to the short-chain dehydrogenases/reductases (SDR) family.

It is found in the sarcoplasmic reticulum membrane. It catalyses the reaction all-trans-retinol + NAD(+) = all-trans-retinal + NADH + H(+). In terms of biological role, NADH-dependent oxidoreductase which catalyzes the oxidation of all-trans-retinol to all-trans-retinal. Plays a role in the regulation of cardiac and skeletal muscle metabolic functions. Maintains Ca(2+) intracellular homeostasis by repressing Ca(2+) release from the sarcoplasmic reticulum (SR) in myotubes, possibly through local alternations in NAD/NADH or retinol/retinal. Also plays a role in Ca(2+) homeostasis by controlling Ca(2+) overload in the cytosol and the SR in myotubes. Involved in glucose uptake into skeletal muscles and muscle performance by activating PI3K and mTORC2-mediated AKT1 phosphorylation signaling pathways, possibly through the action of its downstream catalytic product all-trans-retinoic acid. The sequence is that of Dehydrogenase/reductase SDR family member 7C (DHRS7C) from Bos taurus (Bovine).